The primary structure comprises 181 residues: MKLIVGLGNPGTEYEKTRHNIGFMAVDKICEKLNISLNEKKFNGIFYRNKDFILAKPLTYMNKSGDFVQALMQYYDISVEDLIVVYDDMDLLIGKAVIRQKGSSGGHNGIKDIIEKLKTENIKRLKVGIGRGDNAINFVLGKFSIADYQIIDKILDGVADALVSCIYNDVRFVMNKFNGSF.

Tyr-14 is a binding site for tRNA. His-19 acts as the Proton acceptor in catalysis. TRNA-binding residues include Tyr-60, Asn-62, and Asn-108.

It belongs to the PTH family. As to quaternary structure, monomer.

It is found in the cytoplasm. The catalysed reaction is an N-acyl-L-alpha-aminoacyl-tRNA + H2O = an N-acyl-L-amino acid + a tRNA + H(+). Its function is as follows. Hydrolyzes ribosome-free peptidyl-tRNAs (with 1 or more amino acids incorporated), which drop off the ribosome during protein synthesis, or as a result of ribosome stalling. Functionally, catalyzes the release of premature peptidyl moieties from peptidyl-tRNA molecules trapped in stalled 50S ribosomal subunits, and thus maintains levels of free tRNAs and 50S ribosomes. This Metamycoplasma arthritidis (strain 158L3-1) (Mycoplasma arthritidis) protein is Peptidyl-tRNA hydrolase.